The following is a 254-amino-acid chain: Alcohol dehydrogenase (254 aa).

10–33 serves as a coordination point for NAD(+); sequence FVAGLGGIGLDTSRELVKRDLKNL. Ser138 is a substrate binding site. The active-site Proton acceptor is Tyr151.

It belongs to the short-chain dehydrogenases/reductases (SDR) family. In terms of assembly, homodimer.

It catalyses the reaction a primary alcohol + NAD(+) = an aldehyde + NADH + H(+). The catalysed reaction is a secondary alcohol + NAD(+) = a ketone + NADH + H(+). This chain is Alcohol dehydrogenase (Adh), found in Drosophila madeirensis (Fruit fly).